We begin with the raw amino-acid sequence, 133 residues long: Ribosome-binding factor A (133 aa).

It belongs to the RbfA family. In terms of assembly, monomer. Binds 30S ribosomal subunits, but not 50S ribosomal subunits or 70S ribosomes.

Its subcellular location is the cytoplasm. Its function is as follows. One of several proteins that assist in the late maturation steps of the functional core of the 30S ribosomal subunit. Associates with free 30S ribosomal subunits (but not with 30S subunits that are part of 70S ribosomes or polysomes). Required for efficient processing of 16S rRNA. May interact with the 5'-terminal helix region of 16S rRNA. In Synechocystis sp. (strain ATCC 27184 / PCC 6803 / Kazusa), this protein is Ribosome-binding factor A.